The primary structure comprises 776 residues: Cilium assembly protein DZIP1L (776 aa).

A C2H2-type zinc finger spans residues H166 to H189. Residues G196 to N450 are a coiled coil. Residues S425 and S426 each carry the phosphoserine modification. Positions S520–W776 are disordered. Positions G600 to S618 are enriched in low complexity. Positions W652 to V683 are enriched in polar residues. Residues N685–A694 show a composition bias toward basic and acidic residues. Residues T709 to T721 are compositionally biased toward polar residues.

The protein belongs to the DZIP C2H2-type zinc-finger protein family. In terms of assembly, interacts with SEPTIN2.

It localises to the cytoplasm. Its subcellular location is the cytoskeleton. The protein localises to the cilium basal body. The protein resides in the microtubule organizing center. It is found in the centrosome. It localises to the centriole. In terms of biological role, involved in primary cilium formation. Probably acts as a transition zone protein required for localization of PKD1/PC1 and PKD2/PC2 to the ciliary membrane. The protein is Cilium assembly protein DZIP1L of Rattus norvegicus (Rat).